Reading from the N-terminus, the 430-residue chain is MKMPKDKPHVNIVFIGHVDHGKSTTIGRLLYDTGNIPEQIIKKFEEMGEKGKSFKFAWVMDRLREERERGITIDVAHTKFETPHRYITIIDAPGHRDFVKNMITGASQADAAVLVVAATDGVMPQTKEHAFLARTLGIKHIIVAINKMDMVNYNQKRFEEVKAQVEKLLKMLGYKDFPVIPISAWEGENVVKKSDKMPWYNGPTLIEALDQIPEPEKPVDKPLRIPIQDVYSIKGVGTVPVGRVETGKLRVGEVVIFEPASTIFHKPIQGEVKSIEMHHEPLEEALPGDNIGFNVRGVSKNDIKRGDVAGHTTNPPTVVRTKDTFKAQIIVLNHPTAITVGYSPVLHAHTAQVPVRFEQLLAKLDPKTGNIVEENPQFIKTGDAAIVILRPMKPVVLEPVKEIPQLGRFAIRDMGMTIAAGMVISIQRGE.

The tr-type G domain maps to 7 to 219 (KPHVNIVFIG…DQIPEPEKPV (213 aa)). Positions 16 to 23 (GHVDHGKS) are G1. A GTP-binding site is contributed by 16 to 23 (GHVDHGKS). Residue Ser-23 coordinates Mg(2+). The tract at residues 70 to 74 (GITID) is G2. Residues 91 to 94 (DAPG) form a G3 region. Residues 91–95 (DAPGH) and 146–149 (NKMD) each bind GTP. The segment at 146–149 (NKMD) is G4. The segment at 183 to 185 (SAW) is G5.

It belongs to the TRAFAC class translation factor GTPase superfamily. Classic translation factor GTPase family. EF-Tu/EF-1A subfamily.

Its subcellular location is the cytoplasm. It carries out the reaction GTP + H2O = GDP + phosphate + H(+). Functionally, GTP hydrolase that promotes the GTP-dependent binding of aminoacyl-tRNA to the A-site of ribosomes during protein biosynthesis. The chain is Elongation factor 1-alpha from Pyrococcus woesei.